Consider the following 539-residue polypeptide: Beta-apo-4'-carotenal oxygenase (539 aa).

Active-site residues include E228 and C262.

It belongs to the aldehyde dehydrogenase family.

It catalyses the reaction 4'-apo-beta-carotenal + NAD(+) + H2O = neurosporaxanthin + NADH + 2 H(+). Functionally, beta-apo-4'-carotenal oxygenase involved in the last step of synthesis of neurosporaxanthin, a carboxylic apocarotenoid acting as an essential protective pigments and leading to orange pigmentation. Converts the aldehyde beta-apo-4'-carotenal into neurosporaxanthin. Is also able to use shorter apocarotenals as substrates (such as beta-apo-8'-carotenal (C30), beta-apo-10'-carotenal (C27), or the acyclic apocarotenal apo-8'-lycopenal (C30)), indicating wide substrate specificity. Neurosporaxanthin is synthesized from geranyl-geranyl pyrophosphate (GGPP) through several enzymatic activities. Phytoene synthase activity performed by the bifunctional enzyme carAR first produces phytoene from geranyl-geranyl pyrophosphate (GGPP). The phytoene dehydrogenase carB then introduces 4 desaturations to lead to lycopene which is substrate of the carotene cyclase activity of carAR that leads to the production of gamma-carotene. CarB then performs a 5th desaturation reaction to yield torulene. Torulene is the substrate of the dioxidase carT that breaks the molecule, removing five carbon atoms to yield beta-apo-4'-carotenal, whereas the aldehyde dehydrogenase carD mediates the last step by converting beta-apo-4'-carotenal into neurosporaxanthin. This chain is Beta-apo-4'-carotenal oxygenase, found in Gibberella fujikuroi (strain CBS 195.34 / IMI 58289 / NRRL A-6831) (Bakanae and foot rot disease fungus).